A 318-amino-acid chain; its full sequence is Taste receptor type 2 member 60 (318 aa).

The Extracellular segment spans residues 1-7 (MNGDHMV). The helical transmembrane segment at 8–28 (LGSSVTDKKAIILVTILLLLR) threads the bilayer. Residues 29–40 (LVAIAGNGFITA) are Cytoplasmic-facing. Residues 41 to 61 (ALGVEWVLRRMLLPCDKLLVS) form a helical membrane-spanning segment. The Extracellular segment spans residues 62–88 (LGASRFCLQSVVMGKTIYVFLHPMAFP). A helical membrane pass occupies residues 89–109 (YNPVLQFLAFQWDFLNAATLW). The Cytoplasmic portion of the chain corresponds to 110–128 (SSTWLSVFYCVKIATFTHP). Residues 129-149 (VFFWLKHKLSGWLPWMLFSSV) traverse the membrane as a helical segment. Topologically, residues 150–183 (GLSSFTTILFFIGNHRMYQNYLRNHLQPWNVTGD) are extracellular. Asparagine 179 is a glycosylation site (N-linked (GlcNAc...) asparagine). The chain crosses the membrane as a helical span at residues 184–204 (SIRSYCEKFYLFPLKMITWTM). The Cytoplasmic segment spans residues 205-234 (PTAVFFICMILLITSLGRHRKKALLTTSGF). The chain crosses the membrane as a helical span at residues 235–255 (REPSVQAHIKALLALLSFAML). Residues 256 to 264 (FISYFLSLV) lie on the Extracellular side of the membrane. A helical membrane pass occupies residues 265–285 (FSAAGIFPPLDFKFWVWESVI). The Cytoplasmic portion of the chain corresponds to 286-318 (YLCAAVHPIILLFSNCRLRAVLKSRRSSRCGTP).

This sequence belongs to the G-protein coupled receptor T2R family. In terms of tissue distribution, expressed in subsets of taste receptor cells of the tongue and exclusively in gustducin-positive cells.

It is found in the membrane. In terms of biological role, receptor that may play a role in the perception of bitterness and is gustducin-linked. May play a role in sensing the chemical composition of the gastrointestinal content. The activity of this receptor may stimulate alpha gustducin, mediate PLC-beta-2 activation and lead to the gating of TRPM5. In Homo sapiens (Human), this protein is Taste receptor type 2 member 60 (TAS2R60).